A 312-amino-acid chain; its full sequence is tRNA dimethylallyltransferase (312 aa).

Residue 11-18 coordinates ATP; that stretch reads GPTAAGKS. Substrate is bound at residue 13–18; sequence TAAGKS. Interaction with substrate tRNA regions lie at residues 36-39, 160-164, and 243-248; these read DSAT, QRIQR, and RCVGYR.

It belongs to the IPP transferase family. As to quaternary structure, monomer. Requires Mg(2+) as cofactor.

It catalyses the reaction adenosine(37) in tRNA + dimethylallyl diphosphate = N(6)-dimethylallyladenosine(37) in tRNA + diphosphate. In terms of biological role, catalyzes the transfer of a dimethylallyl group onto the adenine at position 37 in tRNAs that read codons beginning with uridine, leading to the formation of N6-(dimethylallyl)adenosine (i(6)A). This is tRNA dimethylallyltransferase from Bordetella avium (strain 197N).